The primary structure comprises 103 residues: Vesicle-associated membrane protein 3 (103 aa).

The segment at 1–25 (MSTGVPSGSSAATGSNRRLQQTQNQ) is disordered. Residues 1-81 (MSTGVPSGSS…KRKYWWKNCK (81 aa)) are Cytoplasmic-facing. Residues 18–78 (RLQQTQNQVD…AKLKRKYWWK (61 aa)) enclose the v-SNARE coiled-coil homology domain. Residues Lys70, Lys72, and Lys81 each participate in a glycyl lysine isopeptide (Lys-Gly) (interchain with G-Cter in ubiquitin) cross-link. The chain crosses the membrane as a helical; Anchor for type IV membrane protein span at residues 82–102 (MWAIGISVLVIIVIIIIVWCV). Residue Ser103 is a topological domain, vesicular.

This sequence belongs to the synaptobrevin family. Interacts with POPDC1 (via the C-terminus cytoplasmic tail). Interacts with BCAP31; involved in VAMP3 export from the endoplasmic reticulum. Interacts with BAIAP3; this interaction is increased in the presence of calcium. Interacts with PICALM. Post-translationally, ubiquitinated by RNF167 at Lys-70, Lys-72 and Lys-81, regulating the recycling endosome pathway. In terms of processing, (Microbial infection) Targeted and hydrolyzed by C.botulinum neurotoxin type D (BoNT/D, botD) which hydrolyzes the 46-Lys-|-Leu-47 bond and probably inhibits neurotransmitter release. (Microbial infection) Targeted and hydrolyzed by C.botulinum neurotoxin type F (BoNT/F, botF) which hydrolyzes the 45-Gln-|-Lys-46 bond and probably inhibits neurotransmitter release. Post-translationally, (Microbial infection) Targeted and hydrolyzed by C.tetani toxin (tetX) which hydrolyzes the 63-Gln-|-Phe-64 bond and probably inhibits neurotransmitter release. As to expression, ubiquitous.

The protein localises to the early endosome membrane. Its subcellular location is the recycling endosome membrane. It localises to the synapse. The protein resides in the synaptosome. Its function is as follows. SNARE involved in vesicular transport from the late endosomes to the trans-Golgi network. This Rattus norvegicus (Rat) protein is Vesicle-associated membrane protein 3 (Vamp3).